Reading from the N-terminus, the 466-residue chain is GATA-binding factor 2 (466 aa).

Low complexity-rich tracts occupy residues 139–155 (GSST…TPAS) and 174–188 (PDPN…SSSA). The segment at 139 to 196 (GSSTSSTASVSSLTPASHSGSHLFGFPPTPPKEVSPDPNSTSAASPSSSAGARQEDKD) is disordered. GATA-type zinc fingers lie at residues 281 to 305 (CVNC…CNAC) and 335 to 359 (CANC…CNAC). Residues 436–466 (GHILPTPTPIHPSSSISFGHPHPSSMVTAMG) form a disordered region.

In terms of tissue distribution, expressed in all developmental stages of erythroid cells but is additionally found in a limited subset of other tissues.

It is found in the nucleus. In terms of biological role, transcriptional activator which probably serves as a general switch factor for cell-specific development. It binds to DNA sites with the consensus sequence 5'-[AT]GATA[AG]-3' within regulatory regions of genes. The protein is GATA-binding factor 2 (GATA2) of Gallus gallus (Chicken).